The chain runs to 389 residues: 26S proteasome non-ATPase regulatory subunit 6 (389 aa).

In terms of domain architecture, PCI spans 193 to 361; the sequence is DFKQAAELFL…EVVETNRPDS (169 aa).

This sequence belongs to the proteasome subunit S10 family. Component of the 19S proteasome regulatory particle complex. The 26S proteasome consists of a 20S core particle (CP) and two 19S regulatory subunits (RP). The regulatory particle is made of a lid composed of 9 subunits including PSMD6, a base containing 6 ATPases and few additional components.

Its function is as follows. Component of the 26S proteasome, a multiprotein complex involved in the ATP-dependent degradation of ubiquitinated proteins. This complex plays a key role in the maintenance of protein homeostasis by removing misfolded or damaged proteins, which could impair cellular functions, and by removing proteins whose functions are no longer required. Therefore, the proteasome participates in numerous cellular processes, including cell cycle progression, apoptosis, or DNA damage repair. This is 26S proteasome non-ATPase regulatory subunit 6 (PSMD6) from Bos taurus (Bovine).